The following is a 1055-amino-acid chain: TNF receptor-associated factor homolog 1a (1055 aa).

The disordered stretch occupies residues 1–56 (MSESTNEDSGAGRSSLEENSNGQRSQSEEAIAEWRSSEQVENGTPSTSPPYWDIDD). The span at 37 to 46 (SEQVENGTPS) shows a compositional bias: polar residues. In terms of domain architecture, MATH spans 68-191 (FGKNTWTIEK…SGCLTIKAQV (124 aa)). Disordered regions lie at residues 352 to 380 (PKKE…VERD), 431 to 590 (AESE…NGSY), 603 to 772 (FSNG…APII), and 820 to 845 (VGSS…SHPS). The segment covering 433–446 (SEQKGKRGASEKEK) has biased composition (basic and acidic residues). The stretch at 441-496 (ASEKEKKSKKKQAKQKKNKNKGKEMRKEDKVRTQTEEREIEKEECVRAIAESSAEK) forms a coiled coil. Positions 447 to 460 (KSKKKQAKQKKNKN) are enriched in basic residues. Residues 461 to 486 (KGKEMRKEDKVRTQTEEREIEKEECV) show a composition bias toward basic and acidic residues. Over residues 502-513 (DVSDVSDSVDSS) the composition is skewed to low complexity. A compositionally biased stretch (basic and acidic residues) spans 524 to 537 (RESSPVHWEMDASE). The segment covering 569–586 (MDDSSSTCSNDSIQSGVA) has biased composition (polar residues). Positions 657-668 (QKPESPKERSPV) are enriched in basic and acidic residues. 2 stretches are compositionally biased toward polar residues: residues 723–740 (KSPS…QLQT) and 823–845 (SGFT…SHPS).

In terms of assembly, interacts with AHK3. Interacts with ATG6, SINAT1, SINAT2, SINAT5 and SINAT6.

Its subcellular location is the cytoplasm. Its function is as follows. Functions redundantly with TRAF1B in the regulation of plant immune response. Contributes to the turnover of the nucleotide-binding domain and leucine-rich repeat-containing (NB-LRR) immune receptors SNC1 and RPS2. May associate with an E3 ubiquitin-protein ligase complex, which modulates ubiquitination and subsequent degradation of NB-LRR immune sensors to maintain their homeostasis. Functions redundantly with TRAF1B in the regulation of autophagosome formation. Required for SINAT1- and SINAT2-mediated ubiquitination and destabilization of ATG6. Functions as a molecular adapter that helps to regulate autophagy by modulating ATG6 stability. This Arabidopsis thaliana (Mouse-ear cress) protein is TNF receptor-associated factor homolog 1a.